Consider the following 546-residue polypeptide: CTP synthase (546 aa).

An amidoligase domain region spans residues 1–269 (MNSNTKIIFV…DAKLVELLNL (269 aa)). Residue S16 coordinates CTP. S16 serves as a coordination point for UTP. Residues 17–22 (SLGKGV) and D74 each bind ATP. 2 residues coordinate Mg(2+): D74 and E143. Residues 150–152 (DIE), 190–195 (KTKPTQ), and K226 each bind CTP. UTP-binding positions include 190–195 (KTKPTQ) and K226. The region spanning 294-546 (IIAMVGKYVS…IQAAIENSNN (253 aa)) is the Glutamine amidotransferase type-1 domain. G356 is a binding site for L-glutamine. The active-site Nucleophile; for glutamine hydrolysis is C383. Residues 384 to 387 (LGMQ), E407, and R474 contribute to the L-glutamine site. Catalysis depends on residues H519 and E521.

The protein belongs to the CTP synthase family. Homotetramer.

It catalyses the reaction UTP + L-glutamine + ATP + H2O = CTP + L-glutamate + ADP + phosphate + 2 H(+). The enzyme catalyses L-glutamine + H2O = L-glutamate + NH4(+). It carries out the reaction UTP + NH4(+) + ATP = CTP + ADP + phosphate + 2 H(+). It functions in the pathway pyrimidine metabolism; CTP biosynthesis via de novo pathway; CTP from UDP: step 2/2. Allosterically activated by GTP, when glutamine is the substrate; GTP has no effect on the reaction when ammonia is the substrate. The allosteric effector GTP functions by stabilizing the protein conformation that binds the tetrahedral intermediate(s) formed during glutamine hydrolysis. Inhibited by the product CTP, via allosteric rather than competitive inhibition. Catalyzes the ATP-dependent amination of UTP to CTP with either L-glutamine or ammonia as the source of nitrogen. Regulates intracellular CTP levels through interactions with the four ribonucleotide triphosphates. This is CTP synthase from Francisella tularensis subsp. holarctica (strain FTNF002-00 / FTA).